The following is a 524-amino-acid chain: Cytochrome P450 monooxygenase patH (524 aa).

Topologically, residues 1 to 4 (MEPM) are cytoplasmic. A helical transmembrane segment spans residues 5 to 23 (LLLILVAAVVLLFVRWAFV). Over 24-524 (YGHRTSNMPK…KEVFSQFTEG (501 aa)) the chain is Lumenal. An N-linked (GlcNAc...) asparagine glycan is attached at asparagine 191. Residue cysteine 442 coordinates heme. N-linked (GlcNAc...) asparagine glycosylation is present at asparagine 499.

It belongs to the cytochrome P450 family. The cofactor is heme.

It is found in the endoplasmic reticulum membrane. It catalyses the reaction 3-methylphenol + reduced [NADPH--hemoprotein reductase] + O2 = 3-hydroxybenzyl alcohol + oxidized [NADPH--hemoprotein reductase] + H2O + H(+). It functions in the pathway mycotoxin biosynthesis; patulin biosynthesis. Cytochrome P450 monooxygenase; part of the gene cluster that mediates the biosynthesis of patulin, an acetate-derived tetraketide mycotoxin produced by several fungal species that shows antimicrobial properties against several bacteria. PatH catalyzes the conversion of m-cresol into m-hydroxybenzyl alcohol. The pathway begins with the synthesis of 6-methylsalicylic acid by the polyketide synthase (PKS) patK via condensation of acetate and malonate units. The 6-methylsalicylic acid decarboxylase patG then catalyzes the decarboxylation of 6-methylsalicylic acid to yield m-cresol (also known as 3-methylphenol). These first reactions occur in the cytosol. The intermediate m-cresol is then transported into the endoplasmic reticulum where the cytochrome P450 monooxygenase patH converts it to m-hydroxybenzyl alcohol, which is further converted to gentisyl alcohol by the cytochrome P450 monooxygenase patI. The oxidoreductases patJ and patO further convert gentisyl alcohol to isoepoxydon in the vacuole. PatN catalyzes then the transformation of isoepoxydon into phyllostine. The cluster protein patF is responsible for the conversion from phyllostine to neopatulin whereas the alcohol dehydrogenase patD converts neopatulin to E-ascladiol. The steps between isoepoxydon and E-ascladiol occur in the cytosol, and E-ascladiol is probably secreted to the extracellular space by one of the cluster-specific transporters patC or patM. Finally, the secreted patulin synthase patE catalyzes the conversion of E-ascladiol to patulin. This Aspergillus clavatus (strain ATCC 1007 / CBS 513.65 / DSM 816 / NCTC 3887 / NRRL 1 / QM 1276 / 107) protein is Cytochrome P450 monooxygenase patH.